The following is a 190-amino-acid chain: Transcription termination/antitermination protein NusG (190 aa).

The KOW domain maps to 138–166; it reads VGEIVTVTEGPFETFTGTVEEVDQEKARL.

The protein belongs to the NusG family.

Functionally, participates in transcription elongation, termination and antitermination. The chain is Transcription termination/antitermination protein NusG from Rickettsia bellii (strain RML369-C).